A 217-amino-acid polypeptide reads, in one-letter code: Ribonuclease T (217 aa).

The 176-residue stretch at 20-195 folds into the Exonuclease domain; the sequence is VVVDVETAGF…YDTEKTAELF (176 aa). Aspartate 23, glutamate 25, histidine 182, and aspartate 187 together coordinate Mg(2+). The active-site Proton donor/acceptor is histidine 182.

The protein belongs to the RNase T family. In terms of assembly, homodimer. It depends on Mg(2+) as a cofactor.

Trims short 3' overhangs of a variety of RNA species, leaving a one or two nucleotide 3' overhang. Responsible for the end-turnover of tRNA: specifically removes the terminal AMP residue from uncharged tRNA (tRNA-C-C-A). Also appears to be involved in tRNA biosynthesis. The chain is Ribonuclease T from Vibrio vulnificus (strain YJ016).